The sequence spans 149 residues: Transcriptional repressor NrdR (149 aa).

Residues 3–34 fold into a zinc finger; that stretch reads CPFCGHAATQVIDTRMSEEGDTVRRRRRCESC. An ATP-cone domain is found at 49–139; that stretch reads PAVVKKNGSR…VYRSFEDVSE (91 aa).

The protein belongs to the NrdR family. Zn(2+) is required as a cofactor.

In terms of biological role, negatively regulates transcription of bacterial ribonucleotide reductase nrd genes and operons by binding to NrdR-boxes. The polypeptide is Transcriptional repressor NrdR (Ralstonia nicotianae (strain ATCC BAA-1114 / GMI1000) (Ralstonia solanacearum)).